The following is a 661-amino-acid chain: DNA ligase (661 aa).

Residues 31-35 (DSGYD), 80-81 (SL), and glutamate 109 each bind NAD(+). Lysine 111 (N6-AMP-lysine intermediate) is an active-site residue. Arginine 132, glutamate 167, lysine 283, and lysine 307 together coordinate NAD(+). Zn(2+)-binding residues include cysteine 401, cysteine 404, cysteine 419, and cysteine 424. The 80-residue stretch at 582-661 (AGEQLLQGKT…AGFLNLLGLS (80 aa)) folds into the BRCT domain.

It belongs to the NAD-dependent DNA ligase family. LigA subfamily. Mg(2+) is required as a cofactor. The cofactor is Mn(2+).

It catalyses the reaction NAD(+) + (deoxyribonucleotide)n-3'-hydroxyl + 5'-phospho-(deoxyribonucleotide)m = (deoxyribonucleotide)n+m + AMP + beta-nicotinamide D-nucleotide.. Its function is as follows. DNA ligase that catalyzes the formation of phosphodiester linkages between 5'-phosphoryl and 3'-hydroxyl groups in double-stranded DNA using NAD as a coenzyme and as the energy source for the reaction. It is essential for DNA replication and repair of damaged DNA. This chain is DNA ligase, found in Syntrophomonas wolfei subsp. wolfei (strain DSM 2245B / Goettingen).